Here is a 158-residue protein sequence, read N- to C-terminus: E3 ubiquitin ligase complex SCF subunit sconC (158 aa).

The segment at 100 to 158 (ILAANYLDIKALLDVGCKTVANMIKGKSPEEIRKTFNIQNDFTPEEEDQIRRENEWAEE) is interaction with the F-box domain of F-box proteins.

This sequence belongs to the SKP1 family. In terms of assembly, component of the SCF (SKP1-CUL1-F-box protein) E3 ubiquitin ligase complexes.

It participates in protein modification; protein ubiquitination. Functionally, essential component of the SCF (SKP1-CUL1-F-box protein) E3 ubiquitin ligase complexes, which mediate the ubiquitination and subsequent proteasomal degradation of target proteins. Controls sulfur metabolite repression, probably by mediating the inactivation or degradation of the metR transcription factor. In Aspergillus fumigatus (strain CBS 144.89 / FGSC A1163 / CEA10) (Neosartorya fumigata), this protein is E3 ubiquitin ligase complex SCF subunit sconC (sconC).